The primary structure comprises 320 residues: Solute carrier family 25 member 33 (320 aa).

Solcar repeat units lie at residues 9 to 118 (ENTL…AKEQ), 126 to 213 (NSNT…LKKC), and 231 to 315 (SGFF…IVYL). The next 6 helical transmembrane spans lie at 12–32 (LLHL…TCPL), 49–65 (VYYP…AGMV), 121–141 (GIFV…AAFV), 190–210 (LTAS…YESL), 233–253 (FFGL…IAYP), and 298–318 (QIPN…LLGE).

This sequence belongs to the mitochondrial carrier (TC 2.A.29) family.

The protein localises to the mitochondrion inner membrane. The catalysed reaction is UTP(in) + UDP(out) = UTP(out) + UDP(in). It carries out the reaction dUTP(out) + UTP(in) = dUTP(in) + UTP(out). It catalyses the reaction 5-methyl-UTP(out) + UTP(in) = 5-methyl-UTP(in) + UTP(out). The enzyme catalyses 5-methyl-UDP(out) + UTP(in) = 5-methyl-UDP(in) + UTP(out). The catalysed reaction is UTP(in) + CTP(out) = UTP(out) + CTP(in). It carries out the reaction CDP(out) + UTP(in) = CDP(in) + UTP(out). It catalyses the reaction dCTP(out) + UTP(in) = dCTP(in) + UTP(out). The enzyme catalyses dCDP(out) + UTP(in) = dCDP(in) + UTP(out). The catalysed reaction is UTP(in) + GTP(out) = UTP(out) + GTP(in). It carries out the reaction UTP(in) + GDP(out) = UTP(out) + GDP(in). It catalyses the reaction dGTP(out) + UTP(in) = dGTP(in) + UTP(out). The enzyme catalyses dGDP(out) + UTP(in) = dGDP(in) + UTP(out). The catalysed reaction is ITP(out) + UTP(in) = ITP(in) + UTP(out). In terms of biological role, mitochondrial transporter that imports/exports pyrimidine nucleotides into and from mitochondria. Selectively transports uridine, thymidine, guanosine, cytosine and inosine (deoxy)nucleoside di- and triphosphates by an antiport mechanism. May import (deoxy)nucleoside triphosphates in exchange for intramitochondrial (deoxy)nucleoside diphosphates, thus providing precursors necessary for de novo synthesis of mitochondrial DNA and RNA while exporting products of their catabolism. Participates in mitochondrial genome maintenance, regulation of mitochondrial membrane potential and mitochondrial respiration. Upon INS or IGF1 stimulation regulates cell growth and proliferation by controlling mitochondrial DNA replication and transcription, the ratio of mitochondria-to nuclear-encoded components of the electron transport chain resulting in control of mitochondrial ROS production. Participates in dendritic cell endocytosis and may associate with mitochondrial oxidative phosphorylation. The protein is Solute carrier family 25 member 33 (Slc25a33) of Mus musculus (Mouse).